Reading from the N-terminus, the 501-residue chain is Dipeptide and tripeptide permease A (501 aa).

Over 1–34 (MSTANNNQPESISMNAFKQPKAFYLIFSIELWER) the chain is Cytoplasmic. Residues 35–55 (FGYYGLQGIMAVYLVKMLGMS) traverse the membrane as a helical segment. Over 56-59 (EADS) the chain is Periplasmic. Residues 60–80 (ITLFSSFSALVYGFVAIGGWL) form a helical membrane-spanning segment. The Cytoplasmic portion of the chain corresponds to 81-89 (GDKVLGAKR). The next 2 membrane-spanning stretches (helical) occupy residues 90–110 (VIVL…YSGH) and 111–131 (EIFW…LFKA). Residues 132-153 (NPSSLLSTCYSKDDPRLDGAFT) are Periplasmic-facing. Residues 154-174 (MYYMSINIGSFFSMLATPWLA) traverse the membrane as a helical segment. At 175–178 (AKYG) the chain is on the cytoplasmic side. The helical transmembrane segment at 179–199 (WSVAFSLSVVGMLITLVNFWF) threads the bilayer. At 200–220 (CRKWVKNQGSKPDFLPLQFKK) the chain is on the periplasmic side. The helical transmembrane segment at 221 to 241 (LLMVLVGIIALITLSNWLLHN) threads the bilayer. Residues 242–246 (QIIAR) are Cytoplasmic-facing. Residues 247 to 267 (WALALVSLGIIFIFTKETLFL) form a helical membrane-spanning segment. Over 268-274 (QGIARRR) the chain is Periplasmic. A helical transmembrane segment spans residues 275–295 (MIVAFLLMLEAVIFFVLYSQM). Residues 296-320 (PTSLNFFAIHNVEHSIFGIGFEPEQ) are Cytoplasmic-facing. A helical membrane pass occupies residues 321–341 (FQALNPFWIMLASPILAAIYN). Residues 342–352 (KMGDRLPMPHK) are Periplasmic-facing. The chain crosses the membrane as a helical span at residues 353–373 (FAFGMMLCSAAFLVLPWGASF). Residues 374–383 (ANEHGIVSVN) are Cytoplasmic-facing. A helical transmembrane segment spans residues 384–404 (WLILSYALQSIGELMISGLGL). Over 405-414 (AMVAQLVPQR) the chain is Periplasmic. A helical transmembrane segment spans residues 415–435 (LMGFIMGSWFLTTAAAALIAG). Over 436 to 460 (KVAALTAVPSDAITDAHASLAIYSH) the chain is Cytoplasmic. Residues 461-481 (VFMQIGIVTAIIAVLMMLTAP) form a helical membrane-spanning segment. Topologically, residues 482-501 (KLYRMTLAPSDHNDVKIMTQ) are periplasmic.

It belongs to the major facilitator superfamily. Proton-dependent oligopeptide transporter (POT/PTR) (TC 2.A.17) family. DtpA subfamily.

It localises to the cell inner membrane. In terms of biological role, proton-dependent permease that transports di- and tripeptides. The polypeptide is Dipeptide and tripeptide permease A (Yersinia pestis).